Consider the following 100-residue polypeptide: Urease subunit gamma (100 aa).

This sequence belongs to the urease gamma subunit family. In terms of assembly, heterotrimer of UreA (gamma), UreB (beta) and UreC (alpha) subunits. Three heterotrimers associate to form the active enzyme.

The protein resides in the cytoplasm. The catalysed reaction is urea + 2 H2O + H(+) = hydrogencarbonate + 2 NH4(+). The protein operates within nitrogen metabolism; urea degradation; CO(2) and NH(3) from urea (urease route): step 1/1. The chain is Urease subunit gamma from Hahella chejuensis (strain KCTC 2396).